We begin with the raw amino-acid sequence, 470 residues long: 6-phospho-beta-galactosidase (470 aa).

D-galactose 6-phosphate-binding residues include glutamine 19, histidine 116, asparagine 159, glutamate 160, and asparagine 297. The active-site Proton donor is glutamate 160. Residue glutamate 375 is the Nucleophile of the active site. Positions 430, 431, 437, and 439 each coordinate D-galactose 6-phosphate.

It belongs to the glycosyl hydrolase 1 family.

It catalyses the reaction a 6-phospho-beta-D-galactoside + H2O = D-galactose 6-phosphate + an alcohol. It functions in the pathway carbohydrate metabolism; lactose degradation; D-galactose 6-phosphate and beta-D-glucose from lactose 6-phosphate: step 1/1. The protein is 6-phospho-beta-galactosidase of Staphylococcus aureus (strain USA300).